Consider the following 445-residue polypeptide: Tubulin beta-2B chain (445 aa).

Positions 1–4 (MREI) match the MREI motif motif. Gln11 contacts GTP. A Phosphoserine modification is found at Ser40. Thr55 is subject to Phosphothreonine. Residue Lys58 is modified to N6-acetyllysine; alternate. Lys58 is modified (N6-succinyllysine; alternate). Lys58 participates in a covalent cross-link: Glycyl lysine isopeptide (Lys-Gly) (interchain with G-Cter in ubiquitin); alternate. Residues Glu69, Ser138, Gly142, Thr143, and Gly144 each contribute to the GTP site. Residue Glu69 coordinates Mg(2+). Phosphoserine; by CDK1 is present on Ser172. Residues Asn204 and Asn226 each coordinate GTP. Phosphothreonine occurs at positions 285 and 290. The residue at position 318 (Arg318) is an Omega-N-methylarginine. Residue Lys324 forms a Glycyl lysine isopeptide (Lys-Gly) (interchain with G-Cter in ubiquitin) linkage. The interval 422 to 445 (YQQYQDATADEQGEFEEEEGEDEA) is disordered. A compositionally biased stretch (acidic residues) spans 429–445 (TADEQGEFEEEEGEDEA). At Glu438 the chain carries 5-glutamyl polyglutamate.

Belongs to the tubulin family. Dimer of alpha and beta chains. A typical microtubule is a hollow water-filled tube with an outer diameter of 25 nm and an inner diameter of 15 nM. Alpha-beta heterodimers associate head-to-tail to form protofilaments running lengthwise along the microtubule wall with the beta-tubulin subunit facing the microtubule plus end conferring a structural polarity. Microtubules usually have 13 protofilaments but different protofilament numbers can be found in some organisms and specialized cells. Mg(2+) is required as a cofactor. Post-translationally, some glutamate residues at the C-terminus are polyglycylated, resulting in polyglycine chains on the gamma-carboxyl group. Glycylation is mainly limited to tubulin incorporated into axonemes (cilia and flagella) whereas glutamylation is prevalent in neuronal cells, centrioles, axonemes, and the mitotic spindle. Both modifications can coexist on the same protein on adjacent residues, and lowering polyglycylation levels increases polyglutamylation, and reciprocally. The precise function of polyglycylation is still unclear. In terms of processing, some glutamate residues at the C-terminus are polyglutamylated, resulting in polyglutamate chains on the gamma-carboxyl group. Polyglutamylation plays a key role in microtubule severing by spastin (SPAST). SPAST preferentially recognizes and acts on microtubules decorated with short polyglutamate tails: severing activity by SPAST increases as the number of glutamates per tubulin rises from one to eight, but decreases beyond this glutamylation threshold. Phosphorylated on Ser-172 by CDK1 during the cell cycle, from metaphase to telophase, but not in interphase. This phosphorylation inhibits tubulin incorporation into microtubules.

It is found in the cytoplasm. It localises to the cytoskeleton. Tubulin is the major constituent of microtubules, a cylinder consisting of laterally associated linear protofilaments composed of alpha- and beta-tubulin heterodimers. Microtubules grow by the addition of GTP-tubulin dimers to the microtubule end, where a stabilizing cap forms. Below the cap, tubulin dimers are in GDP-bound state, owing to GTPase activity of alpha-tubulin. Implicated in neuronal migration. This is Tubulin beta-2B chain (TUBB2B) from Bos taurus (Bovine).